Reading from the N-terminus, the 560-residue chain is DNA ligase B (560 aa).

The active-site N6-AMP-lysine intermediate is Lys-124.

The protein belongs to the NAD-dependent DNA ligase family. LigB subfamily.

It catalyses the reaction NAD(+) + (deoxyribonucleotide)n-3'-hydroxyl + 5'-phospho-(deoxyribonucleotide)m = (deoxyribonucleotide)n+m + AMP + beta-nicotinamide D-nucleotide.. Functionally, catalyzes the formation of phosphodiester linkages between 5'-phosphoryl and 3'-hydroxyl groups in double-stranded DNA using NAD as a coenzyme and as the energy source for the reaction. In Escherichia coli O139:H28 (strain E24377A / ETEC), this protein is DNA ligase B.